The following is a 314-amino-acid chain: R2-like ligand binding oxidase (314 aa).

Glutamate 68, glutamate 101, and histidine 104 together coordinate Mn(2+). Residues 71-162 (VTEDIQPFMS…AAQVRASVTY (92 aa)) constitute a cross-link (3-(O4'-tyrosyl)-valine (Val-Tyr)). Glutamate 101 contributes to the Fe cation binding site. 3 residues coordinate Fe cation: glutamate 167, glutamate 202, and histidine 205.

It belongs to the ribonucleoside diphosphate reductase small chain family. R2-like ligand binding oxidase subfamily. In terms of assembly, homodimer. It depends on Fe cation as a cofactor. The cofactor is Mn(2+).

Probable oxidase that might be involved in lipid metabolism. The protein is R2-like ligand binding oxidase of Mycobacterium bovis (strain ATCC BAA-935 / AF2122/97).